We begin with the raw amino-acid sequence, 327 residues long: Glycerol-3-phosphate dehydrogenase [NAD(P)+] (327 aa).

Residues F13, R34, and K107 each coordinate NADPH. Sn-glycerol 3-phosphate is bound by residues K107 and G135. A139 provides a ligand contact to NADPH. The sn-glycerol 3-phosphate site is built by K190, D243, S253, R254, and N255. K190 serves as the catalytic Proton acceptor. Residue R254 coordinates NADPH. NADPH is bound by residues V276 and E277.

The protein belongs to the NAD-dependent glycerol-3-phosphate dehydrogenase family.

The protein localises to the cytoplasm. The enzyme catalyses sn-glycerol 3-phosphate + NAD(+) = dihydroxyacetone phosphate + NADH + H(+). It carries out the reaction sn-glycerol 3-phosphate + NADP(+) = dihydroxyacetone phosphate + NADPH + H(+). The protein operates within membrane lipid metabolism; glycerophospholipid metabolism. Catalyzes the reduction of the glycolytic intermediate dihydroxyacetone phosphate (DHAP) to sn-glycerol 3-phosphate (G3P), the key precursor for phospholipid synthesis. The chain is Glycerol-3-phosphate dehydrogenase [NAD(P)+] from Rhizobium etli (strain CIAT 652).